Consider the following 144-residue polypeptide: Large ribosomal subunit protein uL16 (144 aa).

The protein belongs to the universal ribosomal protein uL16 family. In terms of assembly, part of the 50S ribosomal subunit.

Its function is as follows. Binds 23S rRNA and is also seen to make contacts with the A and possibly P site tRNAs. The polypeptide is Large ribosomal subunit protein uL16 (Thermoanaerobacter sp. (strain X514)).